The chain runs to 440 residues: MSAYEYPRLSRSDIITALKDAQIASVTETDLKTPTSDFVSELYTRILIYLDALDEEEKGQVDFEALEQLENPDHHATSMQAMKLYCKVKDMLEMLDCPLPISFKDLLRPESSRTEFFISALLNYGLYKDSKMDLIRPKAEELGLLDEQRKQCEAKVAQLNAEIGEFDEAVERDLPFVQELEANIEQLNKKILELNNQQMSLRATFQKMREKSTQMDNEISKAEFDLVETVQENANLRSQIVQSPDKLQGALEEKKLVLGETKKAEQSAMVTFQEKAAILEVFEKALKKILKSSSQLQLINEQVTNAKTVEKEFKALKDKLSEDGVAYKSLEAKVVERERIVEQLNESLKQLEKEKAVMFDDWTKQLNELKVEVESRRRELETRQTNVESVVAMVDDNTAKTNQVRQSGEAKVKKLAAKYEEIVKQFHEYTVSFDAFLPSL.

Coiled-coil stretches lie at residues 142 to 239 and 299 to 386; these read LGLL…LRSQ and INEQ…RQTN.

It belongs to the NUF2 family. In terms of assembly, component of the NDC80 complex, which consists of NDC80, NUF2, SPC24 and SPC25.

The protein localises to the chromosome. The protein resides in the centromere. In terms of biological role, acts as a component of the essential kinetochore-associated NDC80 complex, which is required for chromosome segregation and spindle checkpoint activity to ensure proper cell division. The chain is Kinetochore protein NUF2 homolog from Arabidopsis thaliana (Mouse-ear cress).